Consider the following 93-residue polypeptide: Large ribosomal subunit protein uL23cz/uL23cy (93 aa).

It belongs to the universal ribosomal protein uL23 family. As to quaternary structure, part of the 50S ribosomal subunit.

It is found in the plastid. Its subcellular location is the chloroplast. Its function is as follows. Binds to 23S rRNA. This is Large ribosomal subunit protein uL23cz/uL23cy (rpl23-A) from Helianthus annuus (Common sunflower).